The chain runs to 651 residues: Acid beta-fructofuranosidase (651 aa).

Residues 1–23 (MEHHKPLLPTSSHAAPNPRTRKD) lie on the Cytoplasmic side of the membrane. The propeptide at 1-103 (MEHHKPLLPT…LFSGEGGASE (103 aa)) is removed in mature form. A helical; Signal-anchor for type II membrane protein transmembrane segment spans residues 24–44 (LLLLLCALLFLSSLVAFGRNR). The Lumenal portion of the chain corresponds to 45-651 (ASNVPHDHVS…PFPFNPDQKN (607 aa)). The tract at residues 48–76 (VPHDHVSSSASNHQQEHQSPTSLPSSKWH) is disordered. Residues 54 to 72 (SSSASNHQQEHQSPTSLPS) show a composition bias toward polar residues. Substrate is bound by residues 127 to 130 (WMND), Q146, W154, and 189 to 190 (WT). D130 is an active-site residue. N210 is a glycosylation site (N-linked (GlcNAc...) asparagine). A substrate-binding site is contributed by 253 to 254 (RD). N-linked (GlcNAc...) asparagine glycosylation is present at N275. 2 residues coordinate substrate: E308 and D343. C500 and C548 are disulfide-bonded. Residue N620 is glycosylated (N-linked (GlcNAc...) asparagine).

This sequence belongs to the glycosyl hydrolase 32 family. As to quaternary structure, may be present in two forms, a 70 kDa monomer and a heterodimer of the 30 kDa and 38 kDa subunits. The ratio of the levels of the two forms within cells appears to be regulated developmentally.

Its subcellular location is the membrane. It is found in the vacuole lumen. It carries out the reaction Hydrolysis of terminal non-reducing beta-D-fructofuranoside residues in beta-D-fructofuranosides.. Its pathway is glycan biosynthesis; sucrose metabolism. The protein is Acid beta-fructofuranosidase of Phaseolus vulgaris (Kidney bean).